The sequence spans 580 residues: Guanine nucleotide-binding protein alpha-4 subunit (580 aa).

Residues 1 to 10 (MSPSVSSPQL) show a composition bias toward polar residues. The segment at 1 to 28 (MSPSVSSPQLRHTKSNRAISRIDRTDPL) is disordered. One can recognise a G-alpha domain in the interval 93–579 (RVYKMVLLGQ…RENLKLTGLV (487 aa)). The interval 96–109 (KMVLLGQAGAGKTT) is G1 motif. 101-108 (GQAGAGKT) serves as a coordination point for GTP. Disordered stretches follow at residues 160–196 (KSSE…PNDA) and 302–325 (GRAA…KDNS). Low complexity predominate over residues 167 to 183 (LESSTSASTSTSASASS). Residues 387–395 (DILHSRVRT) form a G2 motif region. GTP contacts are provided by residues 389–395 (LHSRVRT), 415–419 (DVGGS), 484–487 (NKID), and Ala-551. Thr-395 is a binding site for Mg(2+). The G3 motif stretch occupies residues 411–420 (YRIYDVGGSR). Positions 480 to 487 (ILFLNKID) are G4 motif. The tract at residues 549 to 554 (TVATST) is G5 motif.

Belongs to the G-alpha family. In terms of assembly, g proteins are composed of 3 units; alpha, beta and gamma. The alpha chain contains the guanine nucleotide binding site.

In terms of biological role, guanine nucleotide-binding proteins (G proteins) are involved as modulators or transducers in various transmembrane signaling systems. The polypeptide is Guanine nucleotide-binding protein alpha-4 subunit (GPA4) (Mycosarcoma maydis (Corn smut fungus)).